Reading from the N-terminus, the 409-residue chain is Diels-Alderase ucsH (409 aa).

Residues 386–406 traverse the membrane as a helical segment; it reads IYFFICMLLAVVTFGYINILE.

Belongs to the Diels-Alderase family.

It is found in the membrane. It functions in the pathway mycotoxin biosynthesis. In terms of biological role, diels-Alderase; part of the gene cluster that mediates the biosynthesis of UCS1025A, a member of the pyrrolizidinone family that acts as a strong telomerase inhibitor and displays potent antibacterial and antitumor properties. These compounds share a hemiaminal-containing pyrrolizidinone core fused with a gamma-lactone, giving a furopyrrolizidine that is connected to a decalin fragment. The polyketide synthase module (PKS) of the PKS-NRPS ucsA is responsible for the synthesis of the polyketide backbone via the condensation of an acetyl-CoA starter unit with 6 malonyl-CoA units. The downstream nonribosomal peptide synthetase (NRPS) module then amidates the carboxyl end of the polyketide with a 2S,3S-methylproline derived from L-isoleucine by the 2-oxoglutarate-dependent dioxygenase ucsF which converts L-isoleucine to (4S,5S)-4-methylpyrroline-5-carboxylate that is further converted to 2S,3S-methylproline by the pyrroline-5-carboxylate reductase ucsG. Reductive release of the completed aminoacyl polyketide from the assembly line can form the 3-pyrrolin-2-one structure via an intramolecular Knoevenagel reaction. Because ucsA lacks a designated enoylreductase (ER) domain, the required activity is provided the enoyl reductase ucsL. This keto acyclic precursor is the substrate of the Diels-Alderase ucsH, that catalyzes the Diels-Alder cycloaddition. Oxidation of the 3S-methyl group to a carboxylate by the cytochrome P450 monooxygenase ucsK allows an oxa-Michael cyclization that might involve the reductase/dehydrogenase ucsI and which furnishes the furopyrrolizidine. The oxidase ucsJ likely plays a critical role in stereoselective reduction of the C5-C6 double bond to afford the required R-configured carboxylate group. Further enolization and oxidation at C5 by an unidentified enzyme affords the last intermediate that can undergo oxa-Michael cyclization to yield UCS1025A. In Acremonium sp, this protein is Diels-Alderase ucsH.